The primary structure comprises 288 residues: 4-hydroxybenzoate octaprenyltransferase (288 aa).

8 helical membrane passes run Ile23–Ile43, Ala46–Val66, Ile98–Thr118, Leu141–Val161, Glu163–Tyr183, Leu213–Met233, Asn234–Gln254, and Ala268–Trp288.

The protein belongs to the UbiA prenyltransferase family. The cofactor is Mg(2+).

The protein localises to the cell inner membrane. The catalysed reaction is all-trans-octaprenyl diphosphate + 4-hydroxybenzoate = 4-hydroxy-3-(all-trans-octaprenyl)benzoate + diphosphate. It participates in cofactor biosynthesis; ubiquinone biosynthesis. Catalyzes the prenylation of para-hydroxybenzoate (PHB) with an all-trans polyprenyl group. Mediates the second step in the final reaction sequence of ubiquinone-8 (UQ-8) biosynthesis, which is the condensation of the polyisoprenoid side chain with PHB, generating the first membrane-bound Q intermediate 3-octaprenyl-4-hydroxybenzoate. The chain is 4-hydroxybenzoate octaprenyltransferase from Yersinia pestis bv. Antiqua (strain Antiqua).